A 635-amino-acid chain; its full sequence is 1-deoxy-D-xylulose-5-phosphate synthase (635 aa).

Residues His-77 and 118-120 contribute to the thiamine diphosphate site; that span reads GHA. Asp-150 contributes to the Mg(2+) binding site. Residues 151–152, Asn-179, Tyr-290, and Glu-372 contribute to the thiamine diphosphate site; that span reads AS. Asn-179 lines the Mg(2+) pocket.

The protein belongs to the transketolase family. DXPS subfamily. In terms of assembly, homodimer. Mg(2+) is required as a cofactor. Thiamine diphosphate serves as cofactor.

The enzyme catalyses D-glyceraldehyde 3-phosphate + pyruvate + H(+) = 1-deoxy-D-xylulose 5-phosphate + CO2. It participates in metabolic intermediate biosynthesis; 1-deoxy-D-xylulose 5-phosphate biosynthesis; 1-deoxy-D-xylulose 5-phosphate from D-glyceraldehyde 3-phosphate and pyruvate: step 1/1. Functionally, catalyzes the acyloin condensation reaction between C atoms 2 and 3 of pyruvate and glyceraldehyde 3-phosphate to yield 1-deoxy-D-xylulose-5-phosphate (DXP). In Leptospira borgpetersenii serovar Hardjo-bovis (strain JB197), this protein is 1-deoxy-D-xylulose-5-phosphate synthase.